We begin with the raw amino-acid sequence, 162 residues long: Sorting nexin-3 (162 aa).

Positions 1–23 (MPREFKSFGSTEKSLLSKGHGEP) are disordered. In terms of domain architecture, PX spans 38 to 161 (IEVHNPKTHI…VRFIEAEKFV (124 aa)). 4 residues coordinate a 1,2-diacyl-sn-glycero-3-phospho-(1D-myo-inositol-3-phosphate): arginine 81, serine 83, lysine 112, and arginine 127.

It belongs to the sorting nexin family. Monomer. Interacts with RBD2, YIF1, YIP1 and YIP5.

Its subcellular location is the cytoplasm. The protein localises to the golgi apparatus membrane. The protein resides in the prevacuolar compartment membrane. Required for retention of late Golgi membrane proteins. Component of the retrieval machinery that functions by direct interaction with the cytosolic tails of certain TGN membrane proteins during the sorting/budding process at the prevacuolar compartment. Binds phosphatidylinositol 3-phosphate (PtdIns(P3)). The chain is Sorting nexin-3 (SNX3) from Saccharomyces cerevisiae (strain ATCC 204508 / S288c) (Baker's yeast).